Reading from the N-terminus, the 342-residue chain is Nucleoid-associated protein SO_2177 (342 aa).

This sequence belongs to the YejK family.

The protein resides in the cytoplasm. The protein localises to the nucleoid. The sequence is that of Nucleoid-associated protein SO_2177 from Shewanella oneidensis (strain ATCC 700550 / JCM 31522 / CIP 106686 / LMG 19005 / NCIMB 14063 / MR-1).